Reading from the N-terminus, the 160-residue chain is Cytochrome b6-f complex subunit 4 (160 aa).

The next 3 helical transmembrane spans lie at 36–56 (LLYVFPLTMLGTLTCIVGLSV), 95–115 (LLGVLAMAAVPLGLITVPFIE), and 131–151 (LTFIFGFFTAVWLGIGACVPI).

Belongs to the cytochrome b family. PetD subfamily. As to quaternary structure, the 4 large subunits of the cytochrome b6-f complex are cytochrome b6, subunit IV (17 kDa polypeptide, petD), cytochrome f and the Rieske protein, while the 4 small subunits are petG, petL, petM and petN. The complex functions as a dimer.

Its subcellular location is the plastid. The protein localises to the chloroplast thylakoid membrane. In terms of biological role, component of the cytochrome b6-f complex, which mediates electron transfer between photosystem II (PSII) and photosystem I (PSI), cyclic electron flow around PSI, and state transitions. The protein is Cytochrome b6-f complex subunit 4 of Phaeodactylum tricornutum (strain CCAP 1055/1).